Consider the following 114-residue polypeptide: NADH-ubiquinone oxidoreductase chain 3 (114 aa).

The next 3 membrane-spanning stretches (helical) occupy residues 3-23 (LITLIIMAMAMTTALYTINTY), 52-72 (IQFFLVAILFILFDLEIVLLL), and 86-106 (TILLITMLLTILTLGLLYEWL).

It belongs to the complex I subunit 3 family.

It localises to the mitochondrion membrane. The enzyme catalyses a ubiquinone + NADH + 5 H(+)(in) = a ubiquinol + NAD(+) + 4 H(+)(out). Functionally, core subunit of the mitochondrial membrane respiratory chain NADH dehydrogenase (Complex I) that is believed to belong to the minimal assembly required for catalysis. Complex I functions in the transfer of electrons from NADH to the respiratory chain. The immediate electron acceptor for the enzyme is believed to be ubiquinone. This chain is NADH-ubiquinone oxidoreductase chain 3 (MT-ND3), found in Lycodon semicarinatus (Ryukyu odd-tooth snake).